The chain runs to 407 residues: E3 ubiquitin-protein ligase TRIM13 (407 aa).

The RING-type zinc finger occupies 10-58 (CPICCSLFDDPRVLPCSHNFCKKCLEGLLEGNVRNSLWRPSPFKCPTCR). Residues 89-131 (PKMPVCKEHLGQPLNIFCVTDMQLICGVCATRGSHTKHVFSSI) form a B box-type zinc finger. Positions 94, 97, 117, and 123 each coordinate Zn(2+). A coiled-coil region spans residues 172–200 (LQLLTKDSDKVKEFFEKLQHTLDQKKNEI). Residues 316–336 (LLLMAVVLLGLLVFFGPTVFL) form a helical membrane-spanning segment.

As to quaternary structure, interacts (via C-terminal domain) with VCP. Interacts with AKT1; the interaction ubiquitinates AKT1 and leads to its proteasomal degradation. Interacts with MDM2; the interaction ubiquitinates AKT1 and leads to its proteasomal degradation. Interacts with p62/SQSTM1. Interacts with TRAF6. Interacts with IKBKG/NEMO. In terms of processing, auto-ubiquitinated; requires the RING-type zinc finger. Auto-polyubiquitination leads to proteasomal degradation.

It is found in the endoplasmic reticulum membrane. The enzyme catalyses S-ubiquitinyl-[E2 ubiquitin-conjugating enzyme]-L-cysteine + [acceptor protein]-L-lysine = [E2 ubiquitin-conjugating enzyme]-L-cysteine + N(6)-ubiquitinyl-[acceptor protein]-L-lysine.. It functions in the pathway protein modification; protein ubiquitination. Endoplasmic reticulum (ER) membrane anchored E3 ligase involved in the retrotranslocation and turnover of membrane and secretory proteins from the ER through a set of processes named ER-associated degradation (ERAD). This process acts on misfolded proteins as well as in the regulated degradation of correctly folded proteins. Enhances ionizing radiation-induced p53/TP53 stability and apoptosis via ubiquitinating MDM2 and AKT1 and decreasing AKT1 kinase activity through MDM2 and AKT1 proteasomal degradation. Regulates ER stress-induced autophagy, and may act as a tumor suppressor. Also plays a role in innate immune response by stimulating NF-kappa-B activity in the TLR2 signaling pathway. Ubiquitinates TRAF6 via the 'Lys-29'-linked polyubiquitination chain resulting in NF-kappa-B activation. Participates as well in T-cell receptor-mediated NF-kappa-B activation. In the presence of TNF, modulates the IKK complex by regulating IKBKG/NEMO ubiquitination leading to the repression of NF-kappa-B. The chain is E3 ubiquitin-protein ligase TRIM13 (Trim13) from Rattus norvegicus (Rat).